A 312-amino-acid polypeptide reads, in one-letter code: Putative endonuclease 4 (312 aa).

9 residues coordinate Zn(2+): H84, H127, E166, D202, H205, H239, D252, H254, and E284.

The protein belongs to the AP endonuclease 2 family. Zn(2+) is required as a cofactor.

It catalyses the reaction Endonucleolytic cleavage to 5'-phosphooligonucleotide end-products.. Functionally, endonuclease IV plays a role in DNA repair. It cleaves phosphodiester bonds at apurinic or apyrimidinic sites (AP sites) to produce new 5'-ends that are base-free deoxyribose 5-phosphate residues. The protein is Putative endonuclease 4 of Acanthamoeba polyphaga (Amoeba).